A 603-amino-acid chain; its full sequence is F-box only protein 46 (603 aa).

The interval 18–54 (SKYSQNQPRPPSTALKPPVCPDTSSGTEPDHRPAHLE) is disordered. 2 positions are modified to phosphoserine: S21 and S67. Disordered stretches follow at residues 113 to 165 (SRAS…SSGD), 235 to 301 (EAQR…TRAK), 332 to 359 (EASEGETPAPTRPEDTPPAPPPPPARDC), and 412 to 442 (QSRGPEGPPEPPPADIPSTVPGPDDSEGTTD). Position 347 is a phosphothreonine (T347). 2 stretches are compositionally biased toward pro residues: residues 347–356 (TPPAPPPPPA) and 417–426 (EGPPEPPPAD). The region spanning 470 to 522 (RQYMLLLPEHVLVKIFSFLPTRALAALKCTCHHFKGIIEAFGVRATDSRWSRD) is the F-box domain.

In terms of assembly, part of a SCF (SKP1-cullin-F-box) protein ligase complex SCF(FBXO46) composed of CUL1, SKP1, RBX1 and FBXO46. Phosphorylated by ATM in response to DNA damage, promoting ubiquitination and degradation by the SCF(FBXO31) complex. In terms of processing, ATM-phosphorylated FBXO46 is ubiquitinated and degradaded by the SCF(FBXO31) complex in response to DNA damage.

Its pathway is protein modification; protein ubiquitination. Its function is as follows. Substrate-recognition component of the SCF(FBXO46) protein ligase complex, which mediates the ubiquitination and degradation of target proteins. In absence of stress, the SCF(FBXO46) complex catalyzes ubiquitination and degradation of MTOR-phosphorylated FBXO31. This Mus musculus (Mouse) protein is F-box only protein 46 (Fbxo46).